The chain runs to 509 residues: ATP synthase subunit alpha, mitochondrial (509 aa).

ATP is bound at residue 171-178 (GDRQTGKT).

Belongs to the ATPase alpha/beta chains family. F-type ATPases have 2 components, CF(1) - the catalytic core - and CF(0) - the membrane proton channel. CF(1) has five subunits: alpha(3), beta(3), gamma(1), delta(1), epsilon(1). CF(0) has three main subunits: a, b and c.

It localises to the mitochondrion. Its subcellular location is the mitochondrion inner membrane. Functionally, mitochondrial membrane ATP synthase (F(1)F(0) ATP synthase or Complex V) produces ATP from ADP in the presence of a proton gradient across the membrane which is generated by electron transport complexes of the respiratory chain. F-type ATPases consist of two structural domains, F(1) - containing the extramembraneous catalytic core, and F(0) - containing the membrane proton channel, linked together by a central stalk and a peripheral stalk. During catalysis, ATP synthesis in the catalytic domain of F(1) is coupled via a rotary mechanism of the central stalk subunits to proton translocation. Subunits alpha and beta form the catalytic core in F(1). Rotation of the central stalk against the surrounding alpha(3)beta(3) subunits leads to hydrolysis of ATP in three separate catalytic sites on the beta subunits. Subunit alpha does not bear the catalytic high-affinity ATP-binding sites. This Nicotiana plumbaginifolia (Leadwort-leaved tobacco) protein is ATP synthase subunit alpha, mitochondrial (ATPA).